Consider the following 425-residue polypeptide: Serine--tRNA ligase (425 aa).

Position 233–235 (233–235 (TAE)) interacts with L-serine. Residue 264 to 266 (RRE) participates in ATP binding. Residue Glu287 participates in L-serine binding. 351 to 354 (EISS) provides a ligand contact to ATP. Ser385 is an L-serine binding site.

The protein belongs to the class-II aminoacyl-tRNA synthetase family. Type-1 seryl-tRNA synthetase subfamily. Homodimer. The tRNA molecule binds across the dimer.

It localises to the cytoplasm. It catalyses the reaction tRNA(Ser) + L-serine + ATP = L-seryl-tRNA(Ser) + AMP + diphosphate + H(+). It carries out the reaction tRNA(Sec) + L-serine + ATP = L-seryl-tRNA(Sec) + AMP + diphosphate + H(+). It participates in aminoacyl-tRNA biosynthesis; selenocysteinyl-tRNA(Sec) biosynthesis; L-seryl-tRNA(Sec) from L-serine and tRNA(Sec): step 1/1. Its function is as follows. Catalyzes the attachment of serine to tRNA(Ser). Is also able to aminoacylate tRNA(Sec) with serine, to form the misacylated tRNA L-seryl-tRNA(Sec), which will be further converted into selenocysteinyl-tRNA(Sec). The polypeptide is Serine--tRNA ligase (Prochlorococcus marinus (strain MIT 9515)).